The primary structure comprises 264 residues: Small ribosomal subunit protein eS1 (264 aa).

Lys-34 carries the N6-acetyllysine; alternate modification. Residue Lys-34 forms a Glycyl lysine isopeptide (Lys-Gly) (interchain with G-Cter in SUMO2); alternate linkage. At Lys-56 the chain carries N6-acetyllysine. Tyr-155 carries the ADP-ribosyltyrosine modification. The segment at 233 to 264 (GEGGSSGKAAGDETGAKVERADGYEPPVQESV) is disordered. At Ser-237 the chain carries Phosphoserine. A compositionally biased stretch (basic and acidic residues) spans 242 to 255 (AGDETGAKVERADG). N6-acetyllysine; alternate is present on Lys-249. A Glycyl lysine isopeptide (Lys-Gly) (interchain with G-Cter in SUMO2); alternate cross-link involves residue Lys-249. Residue Tyr-256 is modified to Phosphotyrosine. Phosphoserine is present on Ser-263.

Belongs to the eukaryotic ribosomal protein eS1 family. Component of the small ribosomal subunit. Mature ribosomes consist of a small (40S) and a large (60S) subunit. The 40S subunit contains about 33 different proteins and 1 molecule of RNA (18S). The 60S subunit contains about 49 different proteins and 3 molecules of RNA (28S, 5.8S and 5S). Identified in a IGF2BP1-dependent mRNP granule complex containing untranslated mRNAs. Binds with high affinity to IPO4. Interacts with DDIT3. Part of the small subunit (SSU) processome, composed of more than 70 proteins and the RNA chaperone small nucleolar RNA (snoRNA) U3. ADP-ribosylated at Tyr-155 by PARP1 in presence of HPF1.

It localises to the cytoplasm. The protein localises to the nucleus. It is found in the nucleolus. In terms of biological role, component of the small ribosomal subunit. The ribosome is a large ribonucleoprotein complex responsible for the synthesis of proteins in the cell. Part of the small subunit (SSU) processome, first precursor of the small eukaryotic ribosomal subunit. During the assembly of the SSU processome in the nucleolus, many ribosome biogenesis factors, an RNA chaperone and ribosomal proteins associate with the nascent pre-rRNA and work in concert to generate RNA folding, modifications, rearrangements and cleavage as well as targeted degradation of pre-ribosomal RNA by the RNA exosome. May play a role during erythropoiesis through regulation of transcription factor DDIT3. The chain is Small ribosomal subunit protein eS1 (Rps3a) from Mus musculus (Mouse).